The sequence spans 291 residues: Phosphate import ATP-binding protein PstB (291 aa).

In terms of domain architecture, ABC transporter spans 44–286 (VKAREVNVFY…PEEKRTQDYI (243 aa)). Residue 76-83 (GPSGCGKS) coordinates ATP.

It belongs to the ABC transporter superfamily. Phosphate importer (TC 3.A.1.7) family. The complex is composed of two ATP-binding proteins (PstB), two transmembrane proteins (PstC and PstA) and a solute-binding protein (PstS).

Its subcellular location is the cell inner membrane. It catalyses the reaction phosphate(out) + ATP + H2O = ADP + 2 phosphate(in) + H(+). In terms of biological role, part of the ABC transporter complex PstSACB involved in phosphate import. Responsible for energy coupling to the transport system. The chain is Phosphate import ATP-binding protein PstB from Chelativorans sp. (strain BNC1).